The chain runs to 144 residues: Cystatin-F (144 aa).

The N-terminal stretch at 1–18 is a signal peptide; that stretch reads MWLAILLALCCLTSDTHG. N-linked (GlcNAc...) asparagine glycosylation occurs at asparagine 61. The short motif at 80–84 is the Secondary area of contact element; sequence QVVKG. 2 cysteine pairs are disulfide-bonded: cysteine 98–cysteine 109 and cysteine 123–cysteine 143.

It belongs to the cystatin family.

Its subcellular location is the secreted. Functionally, inhibits papain and cathepsin L but with affinities lower than other cystatins. May play a role in immune regulation through inhibition of a unique target in the hematopoietic system. The protein is Cystatin-F (Cst7) of Mus musculus (Mouse).